Here is a 104-residue protein sequence, read N- to C-terminus: Large ribosomal subunit protein bL21c (104 aa).

This sequence belongs to the bacterial ribosomal protein bL21 family. As to quaternary structure, part of the 50S ribosomal subunit.

It is found in the plastid. Its subcellular location is the chloroplast. Functionally, this protein binds to 23S rRNA. The protein is Large ribosomal subunit protein bL21c of Guillardia theta (Cryptophyte).